The chain runs to 142 residues: Small heat shock protein IbpB (142 aa).

A sHSP domain is found at 26 to 137; sequence AGESQSFPPY…AAQRIAISER (112 aa).

Belongs to the small heat shock protein (HSP20) family. As to quaternary structure, homodimer. Forms homomultimers of about 100-150 subunits at optimal growth temperatures. Conformation changes to oligomers at high temperatures or high ionic concentrations. The decrease in size of the multimers is accompanied by an increase in chaperone activity.

Its subcellular location is the cytoplasm. Its function is as follows. Associates with aggregated proteins, together with IbpA, to stabilize and protect them from irreversible denaturation and extensive proteolysis during heat shock and oxidative stress. Aggregated proteins bound to the IbpAB complex are more efficiently refolded and reactivated by the ATP-dependent chaperone systems ClpB and DnaK/DnaJ/GrpE. Its activity is ATP-independent. The sequence is that of Small heat shock protein IbpB from Escherichia coli O7:K1 (strain IAI39 / ExPEC).